The primary structure comprises 397 residues: Enoyl-[acyl-carrier-protein] reductase [NADH] FabV (397 aa).

Residues 48 to 53 (GASTGY), 74 to 75 (FE), 111 to 112 (DA), and 139 to 140 (LA) contribute to the NAD(+) site. A substrate-binding site is contributed by Y225. The active-site Proton donor is Y235. Residues K244 and 273-275 (VVT) each bind NAD(+).

Belongs to the TER reductase family. Monomer.

It catalyses the reaction a 2,3-saturated acyl-[ACP] + NAD(+) = a (2E)-enoyl-[ACP] + NADH + H(+). It participates in lipid metabolism; fatty acid biosynthesis. Resistant to triclosan. In terms of biological role, involved in the final reduction of the elongation cycle of fatty acid synthesis (FAS II). Catalyzes the NADH-dependent reduction of the carbon-carbon double bond in the enoyl moiety that is covalently linked to an acyl carrier protein (ACP). This is Enoyl-[acyl-carrier-protein] reductase [NADH] FabV from Aeromonas salmonicida (strain A449).